The following is a 923-amino-acid chain: MQGDSSPSPTTTSSPLIRPINRNVIHRICSGQVILDLSSAVKELVENSLDAGATSIEINLRDYGEDYFQVIDNGCGISPTNFKVLALKHHTSKLEDFTDLLNLTTYGFRGEALSSLCALGNLTVETRTKNEPVATLLTFDHSGLLTAEKKTARQIGTTVTVRKLFSNLPVRSKEFKRNIRKEYGKLVSLLNAYALIAKGVRFVCSNTTGKNPKSVVLNTQGRGSLKDNIITVFGISTFTSLQPVSICVSEDCRVEGFLSKPGQGTGRNLADRQYFFINGRPVDMPKVSKLVNELYKDTSSRKYPVTILDFIVPGGACDLNVTPDKRKVFFSDETSVIGSLREGLNEIYSSSNASYIVNRFEENSEQPDKAGVSSFQKKSNLLSEGIVLDVSSKTRLGEAIEKENPSLREVEIDNSSPMEKFKFEIKACGTKKGEGSLSVHDVTHLDKTPSKGLPQLNVTEKVTDASKDLSSRSSFAQSTLNTFVTMGKRKHENISTILSETPVLRNQTSSYRVEKSKFEVRALASRCLVEGDQLDDMVISKEDMTPSERDSELGNRISPGTQADNVERHEREHEKPIRFEEPTSDNTLTKGDVERVSEDNPRCSQPLRSVATVLDSPAQSTGPKMFSTLEFSFQNLRTRRLERLSRLQSTGYVSKCMNTPQPKKCFAAATLELSQPDDEERKARALAAATSELERLFRKEDFRRMQVLGQFNLGFIIAKLERDLFIVDQHAADEKFNFEHLARSTVLNQQPLLQPLNLELSPEEEVTVLMHMDIIRENGFLLEENPSAPPGKHFRLRAIPYSKNITFGVEDLKDLISTLGDNHGECSVASSYKTSKTDSICPSRVRAMLASRACRSSVMIGDPLRKNEMQKIVEHLADLESPWNCPHGRPTMRHLVDLTTLLTLPDDDNVNDDDDDDATISLA.

3 stretches are compositionally biased toward basic and acidic residues: residues 543 to 553 (DMTPSERDSEL), 565 to 581 (NVER…RFEE), and 591 to 601 (GDVERVSEDNP). Positions 543 to 603 (DMTPSERDSE…ERVSEDNPRC (61 aa)) are disordered.

The protein belongs to the DNA mismatch repair MutL/HexB family. As to quaternary structure, heterodimer of MLH1 and PMS1, called MutLalpha, which is the major MMR MutL activity correcting base-base mismatches as well as IDLs. The heterodimer binds double strand DNA independently of a mismatch with positive cooperativity and has more than one DNA binding site. Forms a ternary complex with either the MSH2-MSH6 (MutSalpha) or the MSH2-MSH3 heterodimer (MutSbeta), which recognize and bind to mismatch DNA. Ternary complex formation is promoted by ATP binding. As to expression, expressed at very low levels in mature leaves. Detected in rapidly dividing tissues.

The protein localises to the nucleus. Its function is as follows. Required for DNA mismatch repair (MMR), correcting base-base mismatches and insertion-deletion loops (IDLs) resulting from DNA replication, DNA damage or from recombination events between non-identical sequences during meiosis. Component of the MutLalpha heterodimer that forms a ternary complex with the MutS heterodimers, which initially recognize the DNA mismatches. This complex is thought to be responsible for directing the downstream MMR events, including strand discrimination, excision, and resynthesis. Plays a major role in maintaining the genetic stability of simple sequence repeats and in the repair of heteroduplex sites present in meiotic recombination intermediates. Does not seem to be required for homologous somatic recombination. In Arabidopsis thaliana (Mouse-ear cress), this protein is DNA mismatch repair protein PMS1 (PMS1).